The following is a 539-amino-acid chain: DnaJ homolog subfamily C member 7 homolog (539 aa).

TPR repeat units follow at residues 3–36 (HEEC…SNGT), 75–108 (IKGY…DPRN), 189–222 (PEYL…DPDY), 235–268 (IESK…DPKL), 273–306 (SQLY…DPNY), and 307–340 (GKAY…DPEN). The 71-residue stretch at 361–431 (DYYKILGVSK…KKKRQYDMGQ (71 aa)) folds into the J domain. The segment at 512-539 (MGGGFGGHSGHSHGGSRSRSSRGGNEYR) is disordered. Basic residues predominate over residues 521-531 (GHSHGGSRSRS).

The polypeptide is DnaJ homolog subfamily C member 7 homolog (dnajc7) (Dictyostelium discoideum (Social amoeba)).